Here is a 323-residue protein sequence, read N- to C-terminus: Tumor-associated calcium signal transducer 2 (323 aa).

The signal sequence occupies residues 1–26; the sequence is MARGPGLAPPPLRLPLLLLVLAAVTG. The Extracellular segment spans residues 27-274; it reads HTAAQDNCTC…PPKFSMKRLT (248 aa). A glycan (N-linked (GlcNAc...) asparagine) is linked at Asn33. The Thyroglobulin type-1 domain occupies 70–145; the sequence is TSKCLLLKAR…TDKGDLSLRC (76 aa). 3 disulfides stabilise this stretch: Cys73–Cys108, Cys119–Cys125, and Cys127–Cys145. The N-linked (GlcNAc...) asparagine glycan is linked to Asn120. Asn168 and Asn208 each carry an N-linked (GlcNAc...) asparagine glycan. The chain crosses the membrane as a helical span at residues 275–297; that stretch reads AGLIAVIVVVVVALVAGMAVLVI. The Cytoplasmic segment spans residues 298-323; it reads TNRRKSGKYKKVEIKELGELRKEPSL.

It belongs to the EPCAM family. In terms of processing, the N-terminus is blocked. In terms of tissue distribution, placenta, pancreatic carcinoma cell lines.

It localises to the membrane. Its function is as follows. May function as a growth factor receptor. This is Tumor-associated calcium signal transducer 2 (TACSTD2) from Homo sapiens (Human).